The chain runs to 80 residues: Small ribosomal subunit protein uS17 (80 aa).

The protein belongs to the universal ribosomal protein uS17 family. In terms of assembly, part of the 30S ribosomal subunit.

One of the primary rRNA binding proteins, it binds specifically to the 5'-end of 16S ribosomal RNA. This is Small ribosomal subunit protein uS17 from Brucella abortus (strain S19).